Reading from the N-terminus, the 88-residue chain is Large ribosomal subunit protein bL27 (88 aa).

The disordered stretch occupies residues 1-21 (MAHKKGASSSRNGRDSAAQRL).

This sequence belongs to the bacterial ribosomal protein bL27 family.

The sequence is that of Large ribosomal subunit protein bL27 from Mycobacterium marinum (strain ATCC BAA-535 / M).